Reading from the N-terminus, the 192-residue chain is VQ motif-containing protein 22 (192 aa).

Positions 24-38 are enriched in low complexity; that stretch reads ASTAVTTTTAGDTTS. Residues 24–65 are disordered; it reads ASTAVTTTTAGDTTSIDSRLSPETGRVTKPTRRRSRASRRTP. Basic residues predominate over residues 52–62; that stretch reads KPTRRRSRASR. The short motif at 76-85 is the VQ element; the sequence is FRAMVQQYTG. Disordered regions lie at residues 101 to 135 and 163 to 192; these read FSLTSSSDPSAGSSQQAPWQYNFQPHAPLQPPQRP and FGTVDGSGGGGSAPSSKEATNSNSSSSRLQ. Composition is skewed to low complexity over residues 102–114 and 175–192; these read SLTSSSDPSAGSS and APSSKEATNSNSSSSRLQ.

The protein resides in the nucleus. In terms of biological role, may function as positive regulator of plant growth. The polypeptide is VQ motif-containing protein 22 (Arabidopsis thaliana (Mouse-ear cress)).